Reading from the N-terminus, the 445-residue chain is ATP-dependent protease ATPase subunit HslU (445 aa).

Residues Ile-17, 59-64 (GVGKTE), Asp-254, Glu-319, and Arg-391 contribute to the ATP site.

This sequence belongs to the ClpX chaperone family. HslU subfamily. A double ring-shaped homohexamer of HslV is capped on each side by a ring-shaped HslU homohexamer. The assembly of the HslU/HslV complex is dependent on binding of ATP.

It localises to the cytoplasm. Its function is as follows. ATPase subunit of a proteasome-like degradation complex; this subunit has chaperone activity. The binding of ATP and its subsequent hydrolysis by HslU are essential for unfolding of protein substrates subsequently hydrolyzed by HslV. HslU recognizes the N-terminal part of its protein substrates and unfolds these before they are guided to HslV for hydrolysis. This Pseudomonas syringae pv. tomato (strain ATCC BAA-871 / DC3000) protein is ATP-dependent protease ATPase subunit HslU.